The chain runs to 240 residues: 7-cyano-7-deazaguanine synthase (240 aa).

14-24 (FSGGQDSATCL) contacts ATP. Zn(2+) is bound by residues Cys202, Cys217, Cys220, and Cys223.

It belongs to the QueC family. Zn(2+) is required as a cofactor.

The enzyme catalyses 7-carboxy-7-deazaguanine + NH4(+) + ATP = 7-cyano-7-deazaguanine + ADP + phosphate + H2O + H(+). The protein operates within purine metabolism; 7-cyano-7-deazaguanine biosynthesis. In terms of biological role, catalyzes the ATP-dependent conversion of 7-carboxy-7-deazaguanine (CDG) to 7-cyano-7-deazaguanine (preQ(0)). The chain is 7-cyano-7-deazaguanine synthase from Rhodopseudomonas palustris (strain BisB18).